Here is a 353-residue protein sequence, read N- to C-terminus: Quinolinate synthase (353 aa).

The iminosuccinate site is built by histidine 47 and serine 68. Residue cysteine 113 participates in [4Fe-4S] cluster binding. Iminosuccinate contacts are provided by residues 139–141 (YAN) and serine 156. Cysteine 200 contacts [4Fe-4S] cluster. Iminosuccinate is bound by residues 226–228 (HPE) and threonine 243. Cysteine 297 is a [4Fe-4S] cluster binding site.

This sequence belongs to the quinolinate synthase family. Type 1 subfamily. It depends on [4Fe-4S] cluster as a cofactor.

It localises to the cytoplasm. It carries out the reaction iminosuccinate + dihydroxyacetone phosphate = quinolinate + phosphate + 2 H2O + H(+). The protein operates within cofactor biosynthesis; NAD(+) biosynthesis; quinolinate from iminoaspartate: step 1/1. Catalyzes the condensation of iminoaspartate with dihydroxyacetone phosphate to form quinolinate. This is Quinolinate synthase from Photobacterium profundum (strain SS9).